The following is a 246-amino-acid chain: Type III pantothenate kinase (246 aa).

6–13 (DVGNTHSV) provides a ligand contact to ATP. 103-106 (GADR) contributes to the substrate binding site. Asp-105 (proton acceptor) is an active-site residue. Asp-125 contacts K(+). Thr-128 is a binding site for ATP. Thr-179 lines the substrate pocket.

This sequence belongs to the type III pantothenate kinase family. As to quaternary structure, homodimer. The cofactor is NH4(+). It depends on K(+) as a cofactor.

The protein localises to the cytoplasm. It catalyses the reaction (R)-pantothenate + ATP = (R)-4'-phosphopantothenate + ADP + H(+). The protein operates within cofactor biosynthesis; coenzyme A biosynthesis; CoA from (R)-pantothenate: step 1/5. Catalyzes the phosphorylation of pantothenate (Pan), the first step in CoA biosynthesis. The protein is Type III pantothenate kinase of Thermotoga sp. (strain RQ2).